A 1184-amino-acid polypeptide reads, in one-letter code: Cartilage intermediate layer protein 1 (1184 aa).

An N-terminal signal peptide occupies residues 1-21 (MAAIKTWVFSFLVLEVTTVLG). N129 and N132 each carry an N-linked (GlcNAc...) asparagine glycan. Residues 150-201 (HIWSSWSPWSKCSAACGHTGVQTRTRTCLAQTVSLCSEATEEGQLCMSQACT) enclose the TSP type-1 domain. Cystine bridges form between C161–C195, C165–C200, C177–C185, and C330–C376. Residues 309 to 393 (PYIVMNPEMK…AVKSKVTQLT (85 aa)) form the Ig-like C2-type domain. Residues N346, N420, N550, N631, N1000, and N1056 are each glycosylated (N-linked (GlcNAc...) asparagine). Residues 1138-1184 (ARSPATGTVQGRVPAMRQQRASRGGLRRRGSMAPLRFSGVAQQPLSN) form a disordered region.

As to quaternary structure, monomer. Interacts with TGFB1. Cleaved into 2 chains possibly by a furin-like protease upon or preceding secretion. As to expression, expressed in articular and meniscal cartilage (at protein level). Primarily localizes to the superficial and intermediate zones of articular cartilage (at protein level).

The protein resides in the secreted. It is found in the extracellular space. Its subcellular location is the extracellular matrix. In terms of biological role, probably plays a role in cartilage scaffolding. May act by antagonizing TGF-beta1 (TGFB1) and IGF1 functions. Has the ability to suppress IGF1-induced proliferation and sulfated proteoglycan synthesis, and inhibits ligand-induced IGF1R autophosphorylation. May inhibit TGFB1-mediated induction of cartilage matrix genes via its interaction with TGFB1. Overexpression may lead to impair chondrocyte growth and matrix repair and indirectly promote inorganic pyrophosphate (PPi) supersaturation in aging and osteoarthritis cartilage. The polypeptide is Cartilage intermediate layer protein 1 (Cilp) (Mus musculus (Mouse)).